Reading from the N-terminus, the 425-residue chain is Nuclear pore complex-interacting protein family member B6 (425 aa).

Residues 332–414 form a disordered region; it reads SPLPPSVDDN…RRLSKLRTRH (83 aa). The span at 353-395 shows a compositional bias: basic and acidic residues; it reads EVEKPPKPKRWRVDEVEQSPKPKRRRVDEVEQSPKPKRQREAE. The segment covering 401–414 has biased composition (basic residues); it reads KPKRRRLSKLRTRH.

Belongs to the NPIP family.

The sequence is that of Nuclear pore complex-interacting protein family member B6 (NPIPB6) from Homo sapiens (Human).